The following is a 187-amino-acid chain: Large ribosomal subunit protein bL25 (187 aa).

The protein belongs to the bacterial ribosomal protein bL25 family. CTC subfamily. Part of the 50S ribosomal subunit; part of the 5S rRNA/L5/L18/L25 subcomplex. Contacts the 5S rRNA. Binds to the 5S rRNA independently of L5 and L18.

In terms of biological role, this is one of the proteins that binds to the 5S RNA in the ribosome where it forms part of the central protuberance. The protein is Large ribosomal subunit protein bL25 of Tropheryma whipplei (strain TW08/27) (Whipple's bacillus).